The primary structure comprises 508 residues: Photosystem II CP47 reaction center protein (508 aa).

Transmembrane regions (helical) follow at residues 21 to 36 (AVHL…WAGS), 101 to 115 (IILS…IWHW), 140 to 156 (GIHL…FGAF), 203 to 218 (IAAG…FHLS), 237 to 252 (VLSS…AFVV), and 457 to 472 (NFAL…HGSR).

The protein belongs to the PsbB/PsbC family. PsbB subfamily. As to quaternary structure, PSII is composed of 1 copy each of membrane proteins PsbA, PsbB, PsbC, PsbD, PsbE, PsbF, PsbH, PsbI, PsbJ, PsbK, PsbL, PsbM, PsbT, PsbX, PsbY, PsbZ, Psb30/Ycf12, at least 3 peripheral proteins of the oxygen-evolving complex and a large number of cofactors. It forms dimeric complexes. Binds multiple chlorophylls. PSII binds additional chlorophylls, carotenoids and specific lipids. serves as cofactor.

It localises to the plastid. Its subcellular location is the chloroplast thylakoid membrane. Functionally, one of the components of the core complex of photosystem II (PSII). It binds chlorophyll and helps catalyze the primary light-induced photochemical processes of PSII. PSII is a light-driven water:plastoquinone oxidoreductase, using light energy to abstract electrons from H(2)O, generating O(2) and a proton gradient subsequently used for ATP formation. This is Photosystem II CP47 reaction center protein from Staurastrum punctulatum (Green alga).